Here is a 1024-residue protein sequence, read N- to C-terminus: NLR family CARD domain-containing protein 4 (1024 aa).

A CARD domain is found at 1–88 (MNFIRNNRRA…FVYQDLTGQN (88 aa)). Residues 95-298 (EEDLNVLAQN…HVGALTAEVG (204 aa)) form a nucleotide-binding domain (NBD) region. ATP is bound by residues threonine 135, 172–177 (GKGKST), and histidine 443. Residues 163–476 (SPCLIEGESG…VSKGNSYLNK (314 aa)) enclose the NACHT domain. Residues 356–463 (AHTQTMLFQT…RLSSLLTSKE (108 aa)) form a winged-helix domain (WHD) region. Serine 533 carries the phosphoserine modification. 12 LRR repeats span residues 578-598 (FFQG…LFDF), 656-679 (KQEF…DIKY), 735-758 (VTGL…LIDS), 762-785 (LKNL…NLAE), 787-812 (LRSL…DYIV), 824-847 (EMKL…LHNL), 848-870 (IKLS…ALQE), 878-902 (LGEL…LLKQ), 911-933 (KLGL…FLEM), 936-963 (LRDL…VFEN), 965-985 (KQLV…ALVR), and 999-1021 (EVKL…TFKL).

As to quaternary structure, homooligomer; homooligomerizes following activation of Naip proteins by pathogenic proteins such as S.typhimurium (Salmonella) flagellin or PrgJ. Component of the NLRC4 inflammasome, at least composed of NLRC4, caspase-1 (CASP1) and some NAIP protein (Naip, Naip2 or Naip5). Interacts with Naip5 and Naip6; following Naip5 and Naip6 engagement by Salmonella flagellin. Interacts with Naip2; following Naip2 engagement by Salmonella PrgJ. The inflammasome is a huge complex that contains multiple copies of NLRC4 and a single Naip protein chain. Some NLRC4 inflammasomes contain PYCARD/ASC, while some others directly contact and activate CASP1. Interacts with EIF2AK2/PKR. Post-translationally, phosphorylated at Ser-533 following infection of macrophages with S.typhimurium (Salmonella). Phosphorylation is essential for NLRC4 inflammasome function to promote caspase-1 activation and pyroptosis. PRKCD phosphorylates Ser-533 in vitro. As to expression, expressed by intestinal mononuclear phagocytes.

The protein resides in the cytoplasm. Its subcellular location is the cytosol. It is found in the inflammasome. Key component of inflammasomes that indirectly senses specific proteins from pathogenic bacteria and fungi and responds by assembling an inflammasome complex that promotes caspase-1 activation, cytokine production and macrophage pyroptosis. The NLRC4 inflammasome is activated as part of the innate immune response to a range of intracellular bacteria. It senses pathogenic proteins of the type III secretion system (T3SS) and type IV secretion system (T4SS) such as flagellin and PrgJ-like rod proteins via the Naip proteins (Naip1, Naip2 or Naip5): specific Naip proteins recognize and bind pathogenic proteins, driving assembly and activation of the NLRC4 inflammasome. The NLRC4 inflammasome senses Gram-negative bacteria such as L.pneumophila and P.aeruginosa, enteric pathogens S.typhimurium (Salmonella) and S.flexneri and fungal pathogen C.albicans. In intestine, the NLRC4 inflammasome is able to discriminate between commensal and pathogenic bacteria and specifically drives production of interleukin-1 beta (IL1B) in response to infection by Salmonella or P.aeruginosa. In case of L.pneumophila infection the inflammasome acts by activating caspase-7. In Mus musculus (Mouse), this protein is NLR family CARD domain-containing protein 4 (Nlrc4).